Here is an 805-residue protein sequence, read N- to C-terminus: Serine/threonine-protein kinase fused (805 aa).

The 251-residue stretch at 4–254 (YAVSSLVGQG…WTQLLCHPFV (251 aa)) folds into the Protein kinase domain. ATP contacts are provided by residues 10–18 (VGQGSFGCV) and lysine 33. Aspartate 125 (proton acceptor) is an active-site residue. The tract at residues 269 to 289 (KESPFTNPEAKVKSSKQSDPE) is disordered. Residues 278–287 (AKVKSSKQSD) show a composition bias toward basic and acidic residues. Phosphoserine occurs at positions 422 and 429. A compositionally biased stretch (basic and acidic residues) spans 447-456 (IATQEKHNQE). A disordered region spans residues 447–496 (IATQEKHNQENKPPAEAISYANSQPPQQQPQQLKHSMHSTNEEKLSSDNT).

It belongs to the protein kinase superfamily. Ser/Thr protein kinase family. In terms of tissue distribution, expressed in all imaginal disks, higher level in wing disk.

The enzyme catalyses L-seryl-[protein] + ATP = O-phospho-L-seryl-[protein] + ADP + H(+). It carries out the reaction L-threonyl-[protein] + ATP = O-phospho-L-threonyl-[protein] + ADP + H(+). Probable serine/threonine-protein kinase; maternally required for correct patterning in the posterior part of each embryonic metamere. May be involved in control of cell division during metamorphosis and ovarian development. May interact with costal-2. This Drosophila melanogaster (Fruit fly) protein is Serine/threonine-protein kinase fused (fu).